We begin with the raw amino-acid sequence, 353 residues long: MYIPSARTAIVQDDKGGLKIDRNAPMPQPRPNELLVQVKAVAINPCDHKMYERFPTPGAVDGCDFAGIVVQLGSDVKTFQIGDRVCGAVHGSNPSRPESGTFAEYTVSDGEFTLKLPPNLSFREAMGLGTTGLSTIGMAIYKGLMLPGSPLEPAEKPRTVLVHGASSSVGTMALQLIRLMGHIPIATCSPRNFELVKKYGAEEVFDYNDPECGQQIKQYTGNTLAYIIDPFTDVKSVALCYEAMGRAGGRYACLEMYPEFALERRSIKVFFALGMALLGHSLDLAYGYERDEDPEMRSFGIGWYKVLQELLYQGKLRPHPLRELEGGFEGILKGVQMVKNKEVSGQKLVVSLE.

46–49 (CDHK) lines the NADP(+) pocket. A substrate-binding site is contributed by 131-138 (TGLSTIGM). NADP(+) contacts are provided by residues 189–192 (SPRN), Y207, and 254–255 (LE). 274 to 278 (GMALL) contacts substrate. 343 to 344 (VS) lines the NADP(+) pocket.

This sequence belongs to the zinc-containing alcohol dehydrogenase family. Monomer.

The protein operates within secondary metabolite biosynthesis. In terms of biological role, trans-enoyl reductase; part of the gene cluster that mediates the biosynthesis of a tyrosine-derived cytochalasan acting as a fungal signal recognized by resistant rice plants and leads to avirulence in Pi33 resistant rice cultivars. The first step in the pathway is catalyzed by the hybrid PKS-NRPS ACE1, assisted by the enoyl reductase RAP1, that are responsible for fusion of the tyrosine precursor and the polyketide backbone. The polyketide synthase module (PKS) of ACE1 is responsible for the synthesis of the polyketide backbone and the downstream nonribosomal peptide synthetase (NRPS) amidates the carboxyl end of the polyketide with the tyrosine precursor. Because ACE1 lacks a designated enoylreductase (ER) domain, the required activity is provided the enoyl reductase RAP1. Reduction by the hydrolyase ORFZ, followed by dehydration and intra-molecular Diels-Alder cyclization by the Diels-Alderase ORF3 then yield the required isoindolone-fused macrocycle. A number of oxidative steps catalyzed by the tailoring enzymes identified within the cluster, including cytochrome P450 monooxygenases CYP1 to CYP4, the FAD-linked oxidoreductase OXR2 and the short-chain dehydrogenase/reductase OXR1, are further required to afford the final cytochalasans that confer avirulence and which have still to be identified. The monooxygenase CYP1 has been shown to be a site-selective C-18 hydroxylase whereas the function of CYP3 is the site-selective epoxidation of the C-6/C-7 olefin that is present in some intermediate compounds. Finally, SYN2 and RAP2 are not required for avirulence in Pi33 resistant rice cultivars. The chain is Trans-enoyl reductase RAP2 from Pyricularia oryzae (strain 70-15 / ATCC MYA-4617 / FGSC 8958) (Rice blast fungus).